The chain runs to 171 residues: 3-hydroxydecanoyl-[acyl-carrier-protein] dehydratase (171 aa).

Histidine 70 is an active-site residue.

The protein belongs to the thioester dehydratase family. FabA subfamily. Homodimer.

The protein localises to the cytoplasm. It catalyses the reaction a (3R)-hydroxyacyl-[ACP] = a (2E)-enoyl-[ACP] + H2O. The catalysed reaction is (3R)-hydroxydecanoyl-[ACP] = (2E)-decenoyl-[ACP] + H2O. It carries out the reaction (2E)-decenoyl-[ACP] = (3Z)-decenoyl-[ACP]. Its pathway is lipid metabolism; fatty acid biosynthesis. In terms of biological role, necessary for the introduction of cis unsaturation into fatty acids. Catalyzes the dehydration of (3R)-3-hydroxydecanoyl-ACP to E-(2)-decenoyl-ACP and then its isomerization to Z-(3)-decenoyl-ACP. Can catalyze the dehydratase reaction for beta-hydroxyacyl-ACPs with saturated chain lengths up to 16:0, being most active on intermediate chain length. The polypeptide is 3-hydroxydecanoyl-[acyl-carrier-protein] dehydratase (Xanthomonas axonopodis pv. citri (strain 306)).